Reading from the N-terminus, the 487-residue chain is Betaine aldehyde dehydrogenase (487 aa).

K(+)-binding residues include Ile-27 and Asp-93. Position 149–151 (149–151 (GAW)) interacts with NAD(+). Lys-161 functions as the Charge relay system in the catalytic mechanism. Residues 175–178 (KPSE) and 228–231 (SVPT) contribute to the NAD(+) site. Leu-243 provides a ligand contact to K(+). Glu-249 serves as the catalytic Proton acceptor. NAD(+)-binding residues include Gly-251, Cys-283, and Glu-384. The active-site Nucleophile is the Cys-283. Cys-283 is modified (cysteine sulfenic acid (-SOH)). K(+) is bound by residues Lys-454 and Gly-457. The active-site Charge relay system is the Glu-461.

The protein belongs to the aldehyde dehydrogenase family. As to quaternary structure, dimer of dimers. Requires K(+) as cofactor.

It carries out the reaction betaine aldehyde + NAD(+) + H2O = glycine betaine + NADH + 2 H(+). The protein operates within amine and polyamine biosynthesis; betaine biosynthesis via choline pathway; betaine from betaine aldehyde: step 1/1. Functionally, involved in the biosynthesis of the osmoprotectant glycine betaine. Catalyzes the irreversible oxidation of betaine aldehyde to the corresponding acid. The chain is Betaine aldehyde dehydrogenase from Brucella melitensis biotype 2 (strain ATCC 23457).